The following is a 773-amino-acid chain: Cellobiose dehydrogenase (773 aa).

Residues methionine 1–serine 18 form the signal peptide. A Pyrrolidone carboxylic acid modification is found at glutamine 19. Positions glutamine 19–glycine 208 are heme domain. Heme contacts are provided by methionine 83 and histidine 181. The tract at residues leucine 203–glycine 227 is disordered. The span at proline 210 to glycine 227 shows a compositional bias: low complexity. Positions tyrosine 235 to proline 773 are oxidoreductase. Position 236-265 (aspartate 236–arginine 265) interacts with FAD. Histidine 707 acts as the Proton acceptor in catalysis.

It in the C-terminal section; belongs to the GMC oxidoreductase family. The cofactor is FAD. It depends on heme as a cofactor.

The protein localises to the secreted. The catalysed reaction is D-cellobiose + A = D-cellobiono-1,5-lactone + AH2. Degrades both lignin and cellulose. Oxidizes cellobiose to cellobionolactone. In Phanerodontia chrysosporium (White-rot fungus), this protein is Cellobiose dehydrogenase (CDH-1).